A 414-amino-acid chain; its full sequence is Serine hydroxymethyltransferase (414 aa).

Residues Leu-117 and 121 to 123 each bind (6S)-5,6,7,8-tetrahydrofolate; that span reads GHL. Lys-226 carries the N6-(pyridoxal phosphate)lysine modification. Residues Glu-241 and 349–351 each bind (6S)-5,6,7,8-tetrahydrofolate; that span reads TPF.

The protein belongs to the SHMT family. Homodimer. The cofactor is pyridoxal 5'-phosphate.

It is found in the cytoplasm. It catalyses the reaction (6R)-5,10-methylene-5,6,7,8-tetrahydrofolate + glycine + H2O = (6S)-5,6,7,8-tetrahydrofolate + L-serine. The protein operates within one-carbon metabolism; tetrahydrofolate interconversion. It participates in amino-acid biosynthesis; glycine biosynthesis; glycine from L-serine: step 1/1. In terms of biological role, catalyzes the reversible interconversion of serine and glycine with tetrahydrofolate (THF) serving as the one-carbon carrier. Also exhibits THF-independent aldolase activity toward beta-hydroxyamino acids, producing glycine and aldehydes, via a retro-aldol mechanism. The protein is Serine hydroxymethyltransferase of Methanothrix thermoacetophila (strain DSM 6194 / JCM 14653 / NBRC 101360 / PT) (Methanosaeta thermophila).